The chain runs to 379 residues: Cell division protein FtsZ (379 aa).

Residues 18–22 (GGGVN), 105–107 (GTG), glutamate 136, arginine 140, and aspartate 184 contribute to the GTP site.

Belongs to the FtsZ family. In terms of assembly, homodimer. Polymerizes to form a dynamic ring structure in a strictly GTP-dependent manner. Interacts directly with several other division proteins.

It localises to the cytoplasm. Its function is as follows. Essential cell division protein that forms a contractile ring structure (Z ring) at the future cell division site. The regulation of the ring assembly controls the timing and the location of cell division. One of the functions of the FtsZ ring is to recruit other cell division proteins to the septum to produce a new cell wall between the dividing cells. Binds GTP and shows GTPase activity. In Mycobacterium bovis (strain ATCC BAA-935 / AF2122/97), this protein is Cell division protein FtsZ.